A 432-amino-acid chain; its full sequence is Tol-Pal system protein TolB (432 aa).

The first 22 residues, 1–22, serve as a signal peptide directing secretion; sequence MMFKKCLSVLFTCLIFISSARA.

It belongs to the TolB family. The Tol-Pal system is composed of five core proteins: the inner membrane proteins TolA, TolQ and TolR, the periplasmic protein TolB and the outer membrane protein Pal. They form a network linking the inner and outer membranes and the peptidoglycan layer.

It localises to the periplasm. Functionally, part of the Tol-Pal system, which plays a role in outer membrane invagination during cell division and is important for maintaining outer membrane integrity. This chain is Tol-Pal system protein TolB, found in Marinomonas sp. (strain MWYL1).